The following is a 180-amino-acid chain: GTP cyclohydrolase 1 (180 aa).

Zn(2+) is bound by residues Cys-71, His-74, and Cys-142.

It belongs to the GTP cyclohydrolase I family. Homomer.

It carries out the reaction GTP + H2O = 7,8-dihydroneopterin 3'-triphosphate + formate + H(+). It functions in the pathway cofactor biosynthesis; 7,8-dihydroneopterin triphosphate biosynthesis; 7,8-dihydroneopterin triphosphate from GTP: step 1/1. The protein is GTP cyclohydrolase 1 of Helicobacter pylori (strain P12).